Consider the following 330-residue polypeptide: Ferredoxin--NADP reductase (330 aa).

FAD-binding residues include Glu-35, Gln-43, Tyr-48, Val-90, Phe-123, Asp-285, and Thr-326.

Belongs to the ferredoxin--NADP reductase type 2 family. Homodimer. The cofactor is FAD.

The enzyme catalyses 2 reduced [2Fe-2S]-[ferredoxin] + NADP(+) + H(+) = 2 oxidized [2Fe-2S]-[ferredoxin] + NADPH. In Streptococcus pyogenes serotype M3 (strain ATCC BAA-595 / MGAS315), this protein is Ferredoxin--NADP reductase.